Consider the following 87-residue polypeptide: UPF0473 protein Daud_0916 (87 aa).

It belongs to the UPF0473 family.

This Desulforudis audaxviator (strain MP104C) protein is UPF0473 protein Daud_0916.